The sequence spans 270 residues: Fluoride-specific ion channel FluC 2 (270 aa).

Transmembrane regions (helical) follow at residues 4–24, 35–55, 67–87, and 96–116; these read IIIL…FIML, LDIL…TALY, IIGT…YGSV, and AFLI…VAVL. Na(+)-binding residues include G74 and S77.

It belongs to the fluoride channel Fluc/FEX (TC 1.A.43) family.

It is found in the cell inner membrane. The enzyme catalyses fluoride(in) = fluoride(out). Its activity is regulated as follows. Na(+) is not transported, but it plays an essential structural role and its presence is essential for fluoride channel function. Fluoride-specific ion channel. Important for reducing fluoride concentration in the cell, thus reducing its toxicity. This chain is Fluoride-specific ion channel FluC 2, found in Brucella melitensis biotype 1 (strain ATCC 23456 / CCUG 17765 / NCTC 10094 / 16M).